We begin with the raw amino-acid sequence, 295 residues long: Indole-3-glycerol phosphate synthase (295 aa).

It belongs to the TrpC family.

It carries out the reaction 1-(2-carboxyphenylamino)-1-deoxy-D-ribulose 5-phosphate + H(+) = (1S,2R)-1-C-(indol-3-yl)glycerol 3-phosphate + CO2 + H2O. The protein operates within amino-acid biosynthesis; L-tryptophan biosynthesis; L-tryptophan from chorismate: step 4/5. This Prochlorococcus marinus (strain MIT 9301) protein is Indole-3-glycerol phosphate synthase.